The following is a 482-amino-acid chain: Membrane-bound lytic murein transglycosylase F (482 aa).

A signal peptide spans 1–13 (MKGLFLRIITALA). A non-LT domain region spans residues 14–267 (LLFWAIDMVF…NLKEKYLGHI (254 aa)). Residues 268–482 (SQFDYVDTRS…NLEEIKENKD (215 aa)) form an LT domain region. Residue E312 is part of the active site.

In the N-terminal section; belongs to the bacterial solute-binding protein 3 family. The protein in the C-terminal section; belongs to the transglycosylase Slt family.

It is found in the cell outer membrane. The catalysed reaction is Exolytic cleavage of the (1-&gt;4)-beta-glycosidic linkage between N-acetylmuramic acid (MurNAc) and N-acetylglucosamine (GlcNAc) residues in peptidoglycan, from either the reducing or the non-reducing ends of the peptidoglycan chains, with concomitant formation of a 1,6-anhydrobond in the MurNAc residue.. In terms of biological role, murein-degrading enzyme that degrades murein glycan strands and insoluble, high-molecular weight murein sacculi, with the concomitant formation of a 1,6-anhydromuramoyl product. Lytic transglycosylases (LTs) play an integral role in the metabolism of the peptidoglycan (PG) sacculus. Their lytic action creates space within the PG sacculus to allow for its expansion as well as for the insertion of various structures such as secretion systems and flagella. This is Membrane-bound lytic murein transglycosylase F from Haemophilus influenzae (strain PittEE).